Here is a 757-residue protein sequence, read N- to C-terminus: Filensin (757 aa).

The interval 1-39 (MYRRSYVFQTRKEQYERAEEAPRAAEPDRLAEARAAAPN) is head. Phosphoserine is present on Ser5. Residues 39–319 (NLAALQGLGE…RIIENEGNRL (281 aa)) form the IF rod domain. The tract at residues 40-74 (LAALQGLGERVAAHVQRARALEQRHAVLRRQLDAF) is coil 1A. N-acetylalanine is present on Ala41. A linker 1 region spans residues 75-83 (QRLDELAGP). The segment at 84-183 (EDALARHVEG…RYKKNLLEIQ (100 aa)) is coil 1B. The linker 12 stretch occupies residues 184-200 (TYVTILQQIIQTTPQAA). The coil 2 stretch occupies residues 201–319 (AITSGMREEK…RIIENEGNRL (119 aa)). Positions 320–756 (SSAFIETPIT…KKLGEKGSSS (437 aa)) are tail. 2 positions are modified to phosphoserine: Ser340 and Ser419. 2 disordered regions span residues 406 to 436 (EGESKLEPGDEEASPPTQEGAPEDVPDGGKI) and 493 to 705 (GVVV…PPRK). A lipid anchor (N-myristoyl glycine) is attached at Gly433. The span at 493 to 512 (GVVVSKGDDSVPPDSGVEPS) shows a compositional bias: low complexity. Position 512 is a phosphoserine (Ser512). A compositionally biased stretch (basic and acidic residues) spans 528-658 (QEKEDGLKEE…KQDDQKEEGA (131 aa)). The stretch at 532–545 (DGLKEEGGPPEGKG) is repeat 1. The interval 532 to 622 (DGLKEEGGPP…EEEGPLQKKE (91 aa)) is 7 X 14 AA tandem repeats. Residues 546-552 (EPPEGKG) form a 2; truncated repeat. Tandem repeats lie at residues 553–566 (DSVKEEGGPPEGKG), 567–580 (DGVKEEGGPPEGKG), 581–594 (DGVKEEGGPPEGKG), 595–608 (DGVKKEGEPPEGKG), and 609–622 (EGLKEEEGPLQKKE). Thr628 and Thr674 each carry phosphothreonine. 3 positions are modified to phosphoserine: Ser701, Ser754, and Ser755.

It belongs to the intermediate filament family. As to quaternary structure, part of a complex required for lens intermediate filament formation composed of BFSP1, BFSP2 and CRYAA. Identified in a complex that contains VIM, EZR, AHNAK, BFSP1, BFSP2, ANK2, PLEC, PRX and spectrin. Found in a complex composed of PPL (via C-terminal linker domain), BFSP1 and BFSP2 in the retinal lens. Within the complex interacts with BFSP2. Interacts (via C-terminus) with MIP (via C-terminus) in aged lens fiber cells. In terms of processing, proteolytically cleaved during lens cell fiber differentiation with increased fragmentation as fiber cell age increases. Post-translationally, myristoylated at Gly-433 following proteolytic cleavage at Asp-432. Acetylated at Ala-41 following proteolytic cleavage at Leu-40. In terms of tissue distribution, abundantly expressed in both the inner and outer cortex of the retina, expressed at a lower level in the nucleus of the retina (at protein level). Detected in eye lens fiber cells (at protein level).

Its subcellular location is the cell membrane. The protein localises to the cytoplasm. It localises to the cytoskeleton. The protein resides in the cell cortex. Required for the correct formation of lens intermediate filaments as part of a complex composed of BFSP1, BFSP2 and CRYAA. Involved in altering the calcium regulation of MIP water permeability. This chain is Filensin (BFSP1), found in Bos taurus (Bovine).